Consider the following 113-residue polypeptide: Large ribosomal subunit protein uL22 (113 aa).

It belongs to the universal ribosomal protein uL22 family. In terms of assembly, part of the 50S ribosomal subunit.

In terms of biological role, this protein binds specifically to 23S rRNA; its binding is stimulated by other ribosomal proteins, e.g. L4, L17, and L20. It is important during the early stages of 50S assembly. It makes multiple contacts with different domains of the 23S rRNA in the assembled 50S subunit and ribosome. Functionally, the globular domain of the protein is located near the polypeptide exit tunnel on the outside of the subunit, while an extended beta-hairpin is found that lines the wall of the exit tunnel in the center of the 70S ribosome. This is Large ribosomal subunit protein uL22 from Trichlorobacter lovleyi (strain ATCC BAA-1151 / DSM 17278 / SZ) (Geobacter lovleyi).